Here is a 30-residue protein sequence, read N- to C-terminus: Cliotide T20 (30 aa).

Residues 1–30 (GSAIRCGESCLLGKCYTPGCTCDRPICKKN) constitute a cross-link (cyclopeptide (Gly-Asn)). Cystine bridges form between Cys-6-Cys-20, Cys-10-Cys-22, and Cys-15-Cys-27.

Contains 3 disulfide bonds. Post-translationally, this is a cyclic peptide. In terms of tissue distribution, expressed in root nodules but not in seed.

Its function is as follows. Probably participates in a plant defense mechanism. Active against Gram-negative bacterium E.coli ATCC 700926 (MIC=0.5 uM) under low-salt conditions. Not active against Gram-positive bacterium S.aureus ATCC 12600 up to a concentration of 100 uM under low-salt conditions. Exhibits immunomodulatory activity but no cytotoxicity in vitro. The polypeptide is Cliotide T20 (Clitoria ternatea (Butterfly pea)).